We begin with the raw amino-acid sequence, 601 residues long: Elongation factor 4 (601 aa).

The region spanning 2 to 184 is the tr-type G domain; it reads DLIRNFSIIA…EMIARVPPPT (183 aa). GTP is bound by residues 14-19 and 131-134; these read DHGKST and NKID.

Belongs to the TRAFAC class translation factor GTPase superfamily. Classic translation factor GTPase family. LepA subfamily.

It is found in the cell inner membrane. The catalysed reaction is GTP + H2O = GDP + phosphate + H(+). In terms of biological role, required for accurate and efficient protein synthesis under certain stress conditions. May act as a fidelity factor of the translation reaction, by catalyzing a one-codon backward translocation of tRNAs on improperly translocated ribosomes. Back-translocation proceeds from a post-translocation (POST) complex to a pre-translocation (PRE) complex, thus giving elongation factor G a second chance to translocate the tRNAs correctly. Binds to ribosomes in a GTP-dependent manner. This Polynucleobacter asymbioticus (strain DSM 18221 / CIP 109841 / QLW-P1DMWA-1) (Polynucleobacter necessarius subsp. asymbioticus) protein is Elongation factor 4.